We begin with the raw amino-acid sequence, 624 residues long: Histone-lysine N-methyltransferase, H3 lysine-9 specific SUVH4 (624 aa).

Disordered stretches follow at residues 1–25 (MAGK…VQKV) and 54–86 (DDTE…KGKQ). A YDG domain is found at 149-302 (GDLPGIDVGH…FTVYKYRLKR (154 aa)). The Pre-SET domain occupies 381 to 443 (TGCNCRGSCT…KCVNRTSQKR (63 aa)). Residues cysteine 383, cysteine 385, cysteine 389, cysteine 395, cysteine 397, cysteine 425, cysteine 429, cysteine 431, and cysteine 435 each coordinate Zn(2+). Residues 446-594 (FNLEVFRSAK…PMQELTYDYG (149 aa)) form the SET domain. Residues 456-458 (KGW), tyrosine 493, arginine 548, and 551-552 (NH) contribute to the S-adenosyl-L-methionine site. Cysteine 554, cysteine 612, cysteine 614, and cysteine 619 together coordinate Zn(2+). Positions 608 to 624 (KQLACYCGALNCRKRLY) constitute a Post-SET domain.

The protein belongs to the class V-like SAM-binding methyltransferase superfamily. Histone-lysine methyltransferase family. Suvar3-9 subfamily. In terms of assembly, interacts with H3 histone. As to expression, expressed in leaves stems and flowers.

It localises to the nucleus. The protein resides in the chromosome. The protein localises to the centromere. It carries out the reaction N(6)-methyl-L-lysyl(9)-[histone H3] + S-adenosyl-L-methionine = N(6),N(6)-dimethyl-L-lysyl(9)-[histone H3] + S-adenosyl-L-homocysteine + H(+). The enzyme catalyses L-lysyl(9)-[histone H3] + S-adenosyl-L-methionine = N(6)-methyl-L-lysyl(9)-[histone H3] + S-adenosyl-L-homocysteine + H(+). Functionally, histone methyltransferase. Methylates 'Lys-9' of histone H3. H3 'Lys-9' methylation represents a specific tag for epigenetic transcriptional repression. The silencing mechanism via DNA CpNpG methylation requires the targeting of chromomethylase CMT3 to methylated histones, probably through an interaction with an HP1-like adapter. By its function, KYP is directly required for the maintenance of the DNA CpNpG and asymmetric methylation. Involved in the silencing of transposable elements. This chain is Histone-lysine N-methyltransferase, H3 lysine-9 specific SUVH4 (SUVH4), found in Arabidopsis thaliana (Mouse-ear cress).